We begin with the raw amino-acid sequence, 301 residues long: Probable alpha-L-glutamate ligase (301 aa).

Residues 104–287 (LQLLSRKGVG…IAGMIIEYIE (184 aa)) enclose the ATP-grasp domain. ATP is bound by residues Lys-141, 178-179 (EY), Asp-187, and 211-213 (RSN). Mg(2+) contacts are provided by Asp-248, Glu-260, and Asn-262. The Mn(2+) site is built by Asp-248, Glu-260, and Asn-262.

The protein belongs to the RimK family. Mg(2+) serves as cofactor. Requires Mn(2+) as cofactor.

In Photobacterium profundum (strain SS9), this protein is Probable alpha-L-glutamate ligase.